Consider the following 317-residue polypeptide: DNA-directed RNA polymerase subunit alpha (317 aa).

The alpha N-terminal domain (alpha-NTD) stretch occupies residues methionine 1–alanine 234. Residues glutamate 249–asparagine 317 form an alpha C-terminal domain (alpha-CTD) region.

It belongs to the RNA polymerase alpha chain family. As to quaternary structure, homodimer. The RNAP catalytic core consists of 2 alpha, 1 beta, 1 beta' and 1 omega subunit. When a sigma factor is associated with the core the holoenzyme is formed, which can initiate transcription.

The catalysed reaction is RNA(n) + a ribonucleoside 5'-triphosphate = RNA(n+1) + diphosphate. Its function is as follows. DNA-dependent RNA polymerase catalyzes the transcription of DNA into RNA using the four ribonucleoside triphosphates as substrates. The sequence is that of DNA-directed RNA polymerase subunit alpha from Mesoplasma florum (strain ATCC 33453 / NBRC 100688 / NCTC 11704 / L1) (Acholeplasma florum).